The following is a 386-amino-acid chain: Signal transduction histidine-protein kinase/phosphatase DegS (386 aa).

Residues 188–384 (KLSREIHDGP…TIIISIPITT (197 aa)) form the Histidine kinase domain. His-194 is modified (phosphohistidine; by autocatalysis).

Post-translationally, autophosphorylated.

It is found in the cytoplasm. It carries out the reaction ATP + protein L-histidine = ADP + protein N-phospho-L-histidine.. Its function is as follows. Member of the two-component regulatory system DegS/DegU, which plays an important role in the transition growth phase. Acts as both a protein kinase that undergoes autophosphorylation and subsequently transfers the phosphate to DegU, and a protein phosphatase that dephosphorylates phospho-DegU. This Brevibacillus brevis (Bacillus brevis) protein is Signal transduction histidine-protein kinase/phosphatase DegS (degS).